The following is a 131-amino-acid chain: Hydrogenase maturation factor HypA (131 aa).

Residue His-2 coordinates Ni(2+). Positions 74, 77, 91, and 94 each coordinate Zn(2+).

It belongs to the HypA/HybF family.

Its function is as follows. Involved in the maturation of [NiFe] hydrogenases. Required for nickel insertion into the metal center of the hydrogenase. The protein is Hydrogenase maturation factor HypA of Streptomyces avermitilis (strain ATCC 31267 / DSM 46492 / JCM 5070 / NBRC 14893 / NCIMB 12804 / NRRL 8165 / MA-4680).